A 725-amino-acid chain; its full sequence is Eukaryotic translation initiation factor 3 subunit B (725 aa).

Residues 46–130 enclose the RRM domain; sequence NCVFIAGIPV…HTFTARSFKD (85 aa). 6 WD repeats span residues 202-240, 242-280, 354-395, 462-504, 510-552, and 554-594; these read RANW…RAHR, AHTN…SLRI, VNIE…SMQR, PLSE…HAPK, DAGV…AKRT, and VIEH…FTFQ.

Belongs to the eIF-3 subunit B family. Component of the eukaryotic translation initiation factor 3 (eIF-3) complex.

The protein localises to the cytoplasm. RNA-binding component of the eukaryotic translation initiation factor 3 (eIF-3) complex, which is involved in protein synthesis of a specialized repertoire of mRNAs and, together with other initiation factors, stimulates binding of mRNA and methionyl-tRNAi to the 40S ribosome. The eIF-3 complex specifically targets and initiates translation of a subset of mRNAs involved in cell proliferation. The polypeptide is Eukaryotic translation initiation factor 3 subunit B (Caenorhabditis elegans).